We begin with the raw amino-acid sequence, 163 residues long: NADH-quinone oxidoreductase subunit I (163 aa).

4Fe-4S ferredoxin-type domains are found at residues 54-84 (LRRYPNGEERCIACKLCEAVCPALAITIESD) and 94-123 (TRYDIDLTKCIFCGFCEEACPVDAVVETPI). Residues Cys-64, Cys-67, Cys-70, Cys-74, Cys-103, Cys-106, Cys-109, and Cys-113 each coordinate [4Fe-4S] cluster.

This sequence belongs to the complex I 23 kDa subunit family. NDH-1 is composed of 14 different subunits. Subunits NuoA, H, J, K, L, M, N constitute the membrane sector of the complex. [4Fe-4S] cluster serves as cofactor.

Its subcellular location is the cell inner membrane. It catalyses the reaction a quinone + NADH + 5 H(+)(in) = a quinol + NAD(+) + 4 H(+)(out). In terms of biological role, NDH-1 shuttles electrons from NADH, via FMN and iron-sulfur (Fe-S) centers, to quinones in the respiratory chain. The immediate electron acceptor for the enzyme in this species is believed to be ubiquinone. Couples the redox reaction to proton translocation (for every two electrons transferred, four hydrogen ions are translocated across the cytoplasmic membrane), and thus conserves the redox energy in a proton gradient. The polypeptide is NADH-quinone oxidoreductase subunit I (Cupriavidus pinatubonensis (strain JMP 134 / LMG 1197) (Cupriavidus necator (strain JMP 134))).